The chain runs to 340 residues: GTP 3',8-cyclase (340 aa).

In terms of domain architecture, Radical SAM core spans 20–246; it reads RFQRQYTYLR…PKAVNDGPAK (227 aa). A GTP-binding site is contributed by Arg29. [4Fe-4S] cluster-binding residues include Cys36 and Cys40. Tyr42 contacts S-adenosyl-L-methionine. Residue Cys43 coordinates [4Fe-4S] cluster. Residue Arg79 participates in GTP binding. Residue Gly83 coordinates S-adenosyl-L-methionine. Residue Thr110 participates in GTP binding. Ser134 is an S-adenosyl-L-methionine binding site. Lys171 contacts GTP. S-adenosyl-L-methionine is bound at residue Met205. Positions 268 and 271 each coordinate [4Fe-4S] cluster. A GTP-binding site is contributed by 273–275; that stretch reads RLR. Cys285 contributes to the [4Fe-4S] cluster binding site.

This sequence belongs to the radical SAM superfamily. MoaA family. In terms of assembly, monomer and homodimer. [4Fe-4S] cluster serves as cofactor.

It catalyses the reaction GTP + AH2 + S-adenosyl-L-methionine = (8S)-3',8-cyclo-7,8-dihydroguanosine 5'-triphosphate + 5'-deoxyadenosine + L-methionine + A + H(+). It participates in cofactor biosynthesis; molybdopterin biosynthesis. Catalyzes the cyclization of GTP to (8S)-3',8-cyclo-7,8-dihydroguanosine 5'-triphosphate. This Haemophilus ducreyi (strain 35000HP / ATCC 700724) protein is GTP 3',8-cyclase.